We begin with the raw amino-acid sequence, 360 residues long: Cyclin-dependent kinase 10 (360 aa).

A Protein kinase domain is found at phenylalanine 39–phenylalanine 323. ATP is bound by residues isoleucine 45 to valine 53 and lysine 68. The active-site Proton acceptor is the aspartate 163. Residue threonine 196 is modified to Phosphothreonine. A disordered region spans residues leucine 334–proline 360.

Belongs to the protein kinase superfamily. CMGC Ser/Thr protein kinase family. CDC2/CDKX subfamily. Heterodimer with CCNQ, the interaction is required for kinase activity. Interacts with ETS2. Interacts with PRK2.

The protein localises to the cytoplasm. It is found in the cytoskeleton. The protein resides in the cilium basal body. It carries out the reaction L-seryl-[protein] + ATP = O-phospho-L-seryl-[protein] + ADP + H(+). It catalyses the reaction L-threonyl-[protein] + ATP = O-phospho-L-threonyl-[protein] + ADP + H(+). Cyclin-dependent kinase that phosphorylates the transcription factor ETS2 (in vitro) and positively controls its proteasomal degradation (in cells). Involved in the regulation of actin cytoskeleton organization through the phosphorylation of actin dynamics regulators such as PKN2. Is a negative regulator of ciliogenesis through phosphorylation of PKN2 and promotion of RhoA signaling. This chain is Cyclin-dependent kinase 10 (CDK10), found in Homo sapiens (Human).